The sequence spans 576 residues: MLRLNGLRVLLRTLAAIGALLTTASASAACADLLALSLPSTTISSATDVPAGAFTAPDGTVLDALPAFCRVVGVSRPASDSEIGFEVWIPSAGWNQNYLQVGTVVFAGNIQYRSLGFALRRGYATATTDGGHRASIGDASFARGHPQKILDWGYQALATTISNGKALVSAYTHRAPHYSYFFGASNGGRDALIAAQRFPGAFDGIIADAPSSAWVHNAFSWLWSQDAQFGSPAATISAAKLPAIQAAALAQCDAKDHTADGVVNDPRRCRFDPRVLLCSGAESDACLTAPQLQTLAAILAGPVNPRTGERIYYGFEPFAVATPGTWNQWITGNAAVPGGGHAVLANQFFANMVFDTGSAGFDHTQVNFDTDVARAERKPVAGQPLASVIDATSADLSGFRARNGKMILYIGWEDPVVPPRGAITYYESVVARQWLDNPQISRAEDALAQTQQFFRLFMVPGMGHFTGGPGTSAFGALYGPPALAIDRQHDVLAAMEAWVEQGIAPERIVAAKYANDDPAKGVVRTRPLCHYPQSAVWIGQGSAEDAQNFICVDSPRGAYLDAAPARAPLPSSAQSR.

Residues 1–28 form the signal peptide; the sequence is MLRLNGLRVLLRTLAAIGALLTTASASA. Residue Ser185 is the Acyl-ester intermediate of the active site. Cystine bridges form between Cys252-Cys269 and Cys278-Cys286. Ca(2+) contacts are provided by Asp253, Asp256, Asp260, and Val262. Active-site charge relay system residues include Asp414 and His464. Cys529 and Cys551 are oxidised to a cystine.

Belongs to the tannase family.

This is an uncharacterized protein from Xanthomonas campestris pv. campestris (strain ATCC 33913 / DSM 3586 / NCPPB 528 / LMG 568 / P 25).